A 261-amino-acid polypeptide reads, in one-letter code: Rho-related GTP-binding protein RhoU (261 aa).

A disordered region spans residues 1–48 (MAPQQGRPALPARCEPPAAPPVPPRRERGGRGARGPGVSGGRGRAGGA). Low complexity predominate over residues 7–16 (RPALPARCEP). Positions 32 to 48 (GARGPGVSGGRGRAGGA) are enriched in gly residues. Residues 59-66 (GDGAVGKT), 106-110 (DTAGQ), and 164-167 (TQSD) contribute to the GTP site. Residues Lys-180 and Lys-251 each participate in a glycyl lysine isopeptide (Lys-Gly) (interchain with G-Cter in ubiquitin) cross-link. Cys-259 carries S-palmitoyl cysteine lipidation.

It belongs to the small GTPase superfamily. Rho family. As to quaternary structure, interacts with PAK1. Interacts with PAK3. Interacts with ARHGAP30 in a GTP-independent manner. In its GTP-loaded conformation, interacts with ARHGAP31. Interacts with PTK2B/PYK2. Interacts with PAK4; interaction protects RHOU from ubiquitination and subsequent degradation. The cofactor is Mg(2+). In terms of processing, tyrosine phosphorylated by SRC in response to PTK2B/PYK2 activation. Post-translationally, ubiquitinated. 'Lys-48'-linked ubiquitination at Lys-180 and Lys-251 by the ECS(RAB40A) complex leading to its degradation.

The protein localises to the cell membrane. It localises to the golgi apparatus membrane. Its subcellular location is the cell junction. The protein resides in the focal adhesion. It is found in the cell projection. The protein localises to the podosome. Its function is as follows. Binds to and activates protein kinase PAK1. Plays a role in the regulation of cell morphology, cytoskeletal organization and focal adhesion assembly during cell migration. Also stimulates quiescent cells to reenter the cell cycle. Has no detectable GTPase activity but its high intrinsic guanine nucleotide exchange activity suggests it is constitutively GTP-bound. The chain is Rho-related GTP-binding protein RhoU from Mus musculus (Mouse).